Here is a 604-residue protein sequence, read N- to C-terminus: Glucose-methanol-choline family oxidoreductase mfmG (604 aa).

A signal peptide spans 1 to 24 (MYMLRPSSLLLATGLLNQGSSVLA). An N-linked (GlcNAc...) asparagine glycan is attached at Asn-32. FAD contacts are provided by residues 44 to 45 (TA) and 65 to 66 (EA). N-linked (GlcNAc...) asparagine glycosylation is found at Asn-76 and Asn-97. 126–129 (NFMA) lines the FAD pocket. 4 N-linked (GlcNAc...) asparagine glycosylation sites follow: Asn-260, Asn-265, Asn-401, and Asn-460. His-538 serves as the catalytic Proton acceptor. FAD is bound by residues Ala-572 and 584–585 (PQ).

This sequence belongs to the GMC oxidoreductase family. In terms of assembly, homodimer. FAD is required as a cofactor.

In terms of biological role, oxidoreductase; part of the gene cluster that mediates the biosynthesis of the phthalide-terpenoid hybrid 11'-O-desmethylfendlerol. MfmG seems not to be involved directly in the biosynthesis of 11'-O-desmethylfendlerol and its role has still to be determined. The biosynthesis of 11'-O-desmethylfendlerol begins with the NR-PKS mfmB that forms 3,5-dimethylorsellinic acid (DMOA), which is then transformed into the phthalide 5,7-dihydroxy-4-(hydroxymethyl)-6-methylphthalide by the cytochrome P450 monooxygenase mfmA and the hydrolase mfmC. Subsequently, the methyltransferase mfmE catalyzes 7-O-methylation to yield 5-hydroxy-4-(hydroxymethyl)-7-methoxy-6-methylphthalide, which undergoes C-3 hydroxylation by the cytochrome P450 monooxygenase mfmF. The resultant cyclopolic acid (2,5-dihydroxy-4-(hydroxymethyl)-7-methoxy-6-methylphthalide) is then farnesylated by the DMATS-type prenyltransferase mfmD to afford 5-O-farnesylcyclopolic acid. Finally, the Pyr4-family terpene cyclase mfmH cyclizes the farnesyl moiety of 5-O-farnesylcyclopolic acid into a drimane-like structure, thus completing the biosynthesis of 11'-O-desmethylfendlerol. The polypeptide is Glucose-methanol-choline family oxidoreductase mfmG (Annulohypoxylon moriforme (Filamentous fungus)).